Here is a 328-residue protein sequence, read N- to C-terminus: Tetraacyldisaccharide 4'-kinase (328 aa).

T55–T62 provides a ligand contact to ATP.

The protein belongs to the LpxK family.

The catalysed reaction is a lipid A disaccharide + ATP = a lipid IVA + ADP + H(+). It participates in glycolipid biosynthesis; lipid IV(A) biosynthesis; lipid IV(A) from (3R)-3-hydroxytetradecanoyl-[acyl-carrier-protein] and UDP-N-acetyl-alpha-D-glucosamine: step 6/6. Transfers the gamma-phosphate of ATP to the 4'-position of a tetraacyldisaccharide 1-phosphate intermediate (termed DS-1-P) to form tetraacyldisaccharide 1,4'-bis-phosphate (lipid IVA). The protein is Tetraacyldisaccharide 4'-kinase of Escherichia coli O45:K1 (strain S88 / ExPEC).